Here is a 251-residue protein sequence, read N- to C-terminus: Probable transcriptional regulatory protein Mflv_3828 (251 aa).

This sequence belongs to the TACO1 family.

The protein localises to the cytoplasm. The chain is Probable transcriptional regulatory protein Mflv_3828 from Mycolicibacterium gilvum (strain PYR-GCK) (Mycobacterium gilvum (strain PYR-GCK)).